The sequence spans 469 residues: MDSHPWIPNSTREIREKMLEKIGVKNIDEFFNDIPRNIRISKEEWDNLEIGLKKPISEITARRIIEEKLSMNKVFVPLLFLGGGAYPHYVPSVIKYLISRGEFLTSYTPYQPEISQGILQALFEYQSLMAELLDMDVVNSSMYDWASALAEALLMSLRVKKNKKKILLPSNMNPIHKRVVNTYLSPHNVRIEYVNYNHDTGLIDLEDLKNKIDNDTAAVYVQSPNFFGYIEENAKEIGEIVHDIDSLFIMGIDPISLGLIKPPGELGADIAVGEGQPLGLGLNYGGPYLGIFATRMDMKLVRQMPGRIIGLTRSVDGSRAFTMILQTREQHIRRAKATSNICTNEALSAIAAAIYLALLGKSGIRKLAELIYYRSHYAQARLREIGLNTDIFKSDFFKEFPINFDNIGVKYRYVHEKLLENNIHGGLYIGNWFPELGETALYAFTEIHTKNDIDLLVEKLADIINELKR.

The protein belongs to the GcvP family. N-terminal subunit subfamily. The glycine cleavage system is composed of four proteins: P, T, L and H. In this organism, the P 'protein' is a heterodimer of two subunits.

It catalyses the reaction N(6)-[(R)-lipoyl]-L-lysyl-[glycine-cleavage complex H protein] + glycine + H(+) = N(6)-[(R)-S(8)-aminomethyldihydrolipoyl]-L-lysyl-[glycine-cleavage complex H protein] + CO2. Functionally, the glycine cleavage system catalyzes the degradation of glycine. The P protein binds the alpha-amino group of glycine through its pyridoxal phosphate cofactor; CO(2) is released and the remaining methylamine moiety is then transferred to the lipoamide cofactor of the H protein. In Staphylothermus marinus (strain ATCC 43588 / DSM 3639 / JCM 9404 / F1), this protein is Probable glycine dehydrogenase (decarboxylating) subunit 1.